A 361-amino-acid polypeptide reads, in one-letter code: Rhomboid domain-containing protein 2 (361 aa).

The next 5 membrane-spanning stretches (helical) occupy residues 19–39 (SATF…LFLL), 63–83 (LVTY…AIII), 100–120 (CFFT…FESV), 158–178 (FGVV…SWLI), and 182–202 (SFLS…TYCY). 2 disordered regions span residues 265–287 (PSYP…PPGH) and 318–361 (PASA…VAMP). Polar residues-rich tracts occupy residues 267 to 276 (YPVTQMQHAS) and 318 to 328 (PASAGTSQGVQ).

The protein belongs to the peptidase S54 family. In terms of assembly, might form homotrimers; these trimers are only formed in retina. As to expression, widely expressed, including in retina and brain (at protein level), as well as in kidney, testis and ovary. Expressed in all layers of the retina, including inner segments of photoreceptor cells and ganglion cells (at protein level).

The protein localises to the golgi apparatus. Its subcellular location is the cis-Golgi network membrane. The polypeptide is Rhomboid domain-containing protein 2 (Rhbdd2) (Mus musculus (Mouse)).